A 169-amino-acid chain; its full sequence is Phosphopantetheine adenylyltransferase (169 aa).

Serine 8 is a binding site for substrate. ATP is bound by residues 8-9 and histidine 16; that span reads SF. Lysine 40, threonine 72, and arginine 86 together coordinate substrate. Residues 87-89, glutamate 97, and 122-128 contribute to the ATP site; these read GLR and YSFLSSS.

The protein belongs to the bacterial CoaD family. Homohexamer. Mg(2+) serves as cofactor.

Its subcellular location is the cytoplasm. It carries out the reaction (R)-4'-phosphopantetheine + ATP + H(+) = 3'-dephospho-CoA + diphosphate. Its pathway is cofactor biosynthesis; coenzyme A biosynthesis; CoA from (R)-pantothenate: step 4/5. In terms of biological role, reversibly transfers an adenylyl group from ATP to 4'-phosphopantetheine, yielding dephospho-CoA (dPCoA) and pyrophosphate. This Cyanothece sp. (strain PCC 7425 / ATCC 29141) protein is Phosphopantetheine adenylyltransferase.